The chain runs to 104 residues: Iron-sulfur cluster assembly protein CyaY (104 aa).

This sequence belongs to the frataxin family.

Involved in iron-sulfur (Fe-S) cluster assembly. May act as a regulator of Fe-S biogenesis. The sequence is that of Iron-sulfur cluster assembly protein CyaY from Aliivibrio salmonicida (strain LFI1238) (Vibrio salmonicida (strain LFI1238)).